A 109-amino-acid polypeptide reads, in one-letter code: Probable cytochrome b-c1 complex subunit 7 (109 aa).

The protein belongs to the UQCRB/QCR7 family. As to quaternary structure, component of the ubiquinol-cytochrome c oxidoreductase (cytochrome b-c1 complex, complex III, CIII), a multisubunit enzyme composed of 3 respiratory subunits cytochrome b, cytochrome c1 and Rieske protein, 2 core protein subunits, and additional low-molecular weight protein subunits. The complex exists as an obligatory dimer and forms supercomplexes (SCs) in the inner mitochondrial membrane with cytochrome c oxidase (complex IV, CIV).

It localises to the mitochondrion inner membrane. In terms of biological role, component of the ubiquinol-cytochrome c oxidoreductase, a multisubunit transmembrane complex that is part of the mitochondrial electron transport chain which drives oxidative phosphorylation. The respiratory chain contains 3 multisubunit complexes succinate dehydrogenase (complex II, CII), ubiquinol-cytochrome c oxidoreductase (cytochrome b-c1 complex, complex III, CIII) and cytochrome c oxidase (complex IV, CIV), that cooperate to transfer electrons derived from NADH and succinate to molecular oxygen, creating an electrochemical gradient over the inner membrane that drives transmembrane transport and the ATP synthase. The cytochrome b-c1 complex catalyzes electron transfer from ubiquinol to cytochrome c, linking this redox reaction to translocation of protons across the mitochondrial inner membrane, with protons being carried across the membrane as hydrogens on the quinol. In the process called Q cycle, 2 protons are consumed from the matrix, 4 protons are released into the intermembrane space and 2 electrons are passed to cytochrome c. In Dictyostelium discoideum (Social amoeba), this protein is Probable cytochrome b-c1 complex subunit 7.